The primary structure comprises 779 residues: Glucan endo-1,3-beta-D-glucosidase 2 (779 aa).

Residues 1–71 form a disordered region; the sequence is MCYSRQAIPP…SNPLADSQVN (71 aa). The segment covering 57-71 has biased composition (polar residues); that stretch reads RTPSSSNPLADSQVN. Residues 73–309 form a beta-sandwich subdomain region; it reads DNIFQSPVLS…NGLICQLSAD (237 aa). A GH81 domain is found at 73–779; sequence DNIFQSPVLS…WSLAYSGAFS (707 aa). The segment at 309–400 is alpha/beta subdomain; that stretch reads DSVPSIDMAA…LTNSFDMQVQ (92 aa). The segment at 375–779 is sufficient for catalytic activity; the sequence is IASSLDSTVK…WSLAYSGAFS (405 aa). The interval 415-779 is (alpha/beta)6 barrel subdomain; it reads NKKADYSQEK…WSLAYSGAFS (365 aa). The active site involves D526. Residues H530, D607, E609, and E613 each coordinate (1,3-beta-D-glucosyl)n. Active-site residues include E609 and E613. A may provide specificity for triple-helical beta-glucan region spans residues 678–680; that stretch reads KID. Y691 contributes to the (1,3-beta-D-glucosyl)n binding site.

Belongs to the glycosyl hydrolase 81 family.

It is found in the cytoplasm. The enzyme catalyses Hydrolysis of (1-&gt;3)-beta-D-glucosidic linkages in (1-&gt;3)-beta-D-glucans.. With respect to regulation, inhibited by mercury ions. Cleaves internal linkages in 1,3-beta-glucan. This chain is Glucan endo-1,3-beta-D-glucosidase 2, found in Saccharomyces cerevisiae (strain ATCC 204508 / S288c) (Baker's yeast).